The following is a 337-amino-acid chain: Inositol 2-dehydrogenase (337 aa).

Belongs to the Gfo/Idh/MocA family. In terms of assembly, homotetramer.

The catalysed reaction is myo-inositol + NAD(+) = scyllo-inosose + NADH + H(+). Involved in the oxidation of myo-inositol (MI) to 2-keto-myo-inositol (2KMI or 2-inosose). The protein is Inositol 2-dehydrogenase of Serratia proteamaculans (strain 568).